A 355-amino-acid chain; its full sequence is IGF-like family receptor 1 (355 aa).

The signal sequence occupies residues 1-22 (MGPGRCLLTALLLLALAPPPEA). The Extracellular portion of the chain corresponds to 23–163 (SQYCGRLEYW…PQQAWPNFLP (141 aa)). The interval 120 to 147 (KGHCPLTPGNPGAPSSQERSSPASSIAW) is disordered. Residues 132 to 144 (APSSQERSSPASS) are compositionally biased toward low complexity. A helical membrane pass occupies residues 164-184 (LVVLVLLLTLAVIAILLFILL). Over 185-355 (WHLCWPKEKA…KLGSSGVCWA (171 aa)) the chain is Cytoplasmic.

The protein resides in the cell membrane. Its function is as follows. Probable cell membrane receptor for the IGF-like family proteins. Binds IGFL1 and IGFL3 with a higher affinity. May also bind IGFL2. This Homo sapiens (Human) protein is IGF-like family receptor 1 (IGFLR1).